Consider the following 352-residue polypeptide: S-adenosylmethionine:tRNA ribosyltransferase-isomerase (352 aa).

This sequence belongs to the QueA family. Monomer.

The protein localises to the cytoplasm. The catalysed reaction is 7-aminomethyl-7-carbaguanosine(34) in tRNA + S-adenosyl-L-methionine = epoxyqueuosine(34) in tRNA + adenine + L-methionine + 2 H(+). The protein operates within tRNA modification; tRNA-queuosine biosynthesis. Functionally, transfers and isomerizes the ribose moiety from AdoMet to the 7-aminomethyl group of 7-deazaguanine (preQ1-tRNA) to give epoxyqueuosine (oQ-tRNA). This chain is S-adenosylmethionine:tRNA ribosyltransferase-isomerase, found in Gloeobacter violaceus (strain ATCC 29082 / PCC 7421).